The chain runs to 437 residues: Phosphatidylserine decarboxylase proenzyme 1, mitochondrial (437 aa).

The transit peptide at M1–Y18 directs the protein to the mitochondrion. At S19 to G38 the chain is on the mitochondrial matrix side. The helical transmembrane segment at L39–H57 threads the bilayer. The Mitochondrial intermembrane segment spans residues E58–H437. Catalysis depends on charge relay system; for autoendoproteolytic cleavage activity residues D157, H287, and S401. The active-site Schiff-base intermediate with substrate; via pyruvic acid; for decarboxylase activity is the S401. S401 is subject to Pyruvic acid (Ser); by autocatalysis.

This sequence belongs to the phosphatidylserine decarboxylase family. PSD-B subfamily. Eukaryotic type I sub-subfamily. Heterodimer of a large membrane-associated beta subunit and a small pyruvoyl-containing alpha subunit. The cofactor is pyruvate. Is synthesized initially as an inactive proenzyme. Formation of the active enzyme involves a self-maturation process in which the active site pyruvoyl group is generated from an internal serine residue via an autocatalytic post-translational modification. Two non-identical subunits are generated from the proenzyme in this reaction, and the pyruvate is formed at the N-terminus of the alpha chain, which is derived from the carboxyl end of the proenzyme. The autoendoproteolytic cleavage occurs by a canonical serine protease mechanism, in which the side chain hydroxyl group of the serine supplies its oxygen atom to form the C-terminus of the beta chain, while the remainder of the serine residue undergoes an oxidative deamination to produce ammonia and the pyruvoyl prosthetic group on the alpha chain. During this reaction, the Ser that is part of the protease active site of the proenzyme becomes the pyruvoyl prosthetic group, which constitutes an essential element of the active site of the mature decarboxylase.

The protein resides in the mitochondrion. The protein localises to the mitochondrion inner membrane. It catalyses the reaction a 1,2-diacyl-sn-glycero-3-phospho-L-serine + H(+) = a 1,2-diacyl-sn-glycero-3-phosphoethanolamine + CO2. It participates in phospholipid metabolism; phosphatidylethanolamine biosynthesis; phosphatidylethanolamine from CDP-diacylglycerol: step 2/2. Catalyzes the formation of phosphatidylethanolamine (PtdEtn) from phosphatidylserine (PtdSer). Plays a central role in phospholipid metabolism and in the interorganelle trafficking of phosphatidylserine. Together with psd2 and psd3, responsible for the majority of phosphatidylethanolamine synthesis. This is Phosphatidylserine decarboxylase proenzyme 1, mitochondrial from Schizosaccharomyces pombe (strain 972 / ATCC 24843) (Fission yeast).